Reading from the N-terminus, the 159-residue chain is Ribosomal RNA large subunit methyltransferase H (159 aa).

Residues Leu76, Gly108, and 127–132 contribute to the S-adenosyl-L-methionine site; that span reads FSKMTF.

The protein belongs to the RNA methyltransferase RlmH family. In terms of assembly, homodimer.

It localises to the cytoplasm. The catalysed reaction is pseudouridine(1915) in 23S rRNA + S-adenosyl-L-methionine = N(3)-methylpseudouridine(1915) in 23S rRNA + S-adenosyl-L-homocysteine + H(+). Specifically methylates the pseudouridine at position 1915 (m3Psi1915) in 23S rRNA. The protein is Ribosomal RNA large subunit methyltransferase H of Bacillus subtilis (strain 168).